We begin with the raw amino-acid sequence, 98 residues long: Beta-elicitin cinnamomin (98 aa).

3 cysteine pairs are disulfide-bonded: Cys-3-Cys-71, Cys-27-Cys-56, and Cys-51-Cys-95. Positions 33-42 match the Beak-like motif 1 (ligand binding) motif; the sequence is YSMLTATALP. A Beak-like motif 2 (ligand binding) motif is present at residues 72–83; that stretch reads DLTVPTSGLVLD.

The protein belongs to the elicitin family.

The protein localises to the secreted. In terms of biological role, induces local and distal defense responses (incompatible hypersensitive reaction) in plants from the solanaceae and cruciferae families. Elicits leaf necrosis and causes the accumulation of pathogenesis-related proteins. Might interact with the lipidic molecules of the plasma membrane. Elicitins are able to load, carry, and transfer sterols between membranes. In Phytophthora cinnamomi (Cinnamon fungus), this protein is Beta-elicitin cinnamomin.